The chain runs to 159 residues: MPKFYCDYCDTYLTHDSPSVRKTHCSGRKHKENVKDYYQKWMEEQAQSLIDKTTAAFQQGKIPPTPFAAPPAGSAMIPPPPSLGGPPRPGMMPAPPMAGPPMMPMMGPPPPGMMPVGHGPGMRPPMGAHMPMMPGPPMMRPPTRPMMLQSRPGMARPDR.

The segment at 4-36 (FYCDYCDTYLTHDSPSVRKTHCSGRKHKENVKD) adopts a Matrin-type zinc-finger fold. Disordered stretches follow at residues 63-95 (PPTPFAAPPAGSAMIPPPPSLGGPPRPGMMPAP) and 139-159 (MRPPTRPMMLQSRPGMARPDR). The span at 77–95 (IPPPPSLGGPPRPGMMPAP) shows a compositional bias: pro residues.

The protein belongs to the U1 small nuclear ribonucleoprotein C family. Component of the U1 snRNP. The U1 snRNP is composed of the U1 snRNA and the 7 core Sm proteins snrpb, snrpd1, snrpd2, snrpd3, snrpe, snrpf and snrpg that assemble in a heptameric protein ring on the Sm site of the small nuclear RNA to form the core snRNP, and at least 3 U1 snRNP-specific proteins snrnp70/U1-70K, snrpa/U1-A and snrpc/U1-C. snrpc/U1-C interacts with U1 snRNA and the 5' splice-site region of the pre-mRNA.

It localises to the nucleus. Functionally, component of the spliceosomal U1 snRNP, which is essential for recognition of the pre-mRNA 5' splice-site and the subsequent assembly of the spliceosome. SNRPC/U1-C is directly involved in initial 5' splice-site recognition for both constitutive and regulated alternative splicing. The interaction with the 5' splice-site seems to precede base-pairing between the pre-mRNA and the U1 snRNA. Stimulates commitment or early (E) complex formation by stabilizing the base pairing of the 5' end of the U1 snRNA and the 5' splice-site region. The chain is U1 small nuclear ribonucleoprotein C from Xenopus laevis (African clawed frog).